We begin with the raw amino-acid sequence, 344 residues long: Tripartite motif-containing protein 44 (344 aa).

Positions Pro69–Pro165 are disordered. Residues Glu88–Pro165 are compositionally biased toward acidic residues. The B box-type zinc-finger motif lies at Val174–Leu215. Cys179, His182, Cys201, and His207 together coordinate Zn(2+). Residues Ala290–Glu325 adopt a coiled-coil conformation. Positions Gln309 to Thr344 are disordered. The span at Gly330–Thr344 shows a compositional bias: acidic residues. Phosphoserine is present on residues Ser336 and Ser339.

Interacts (via coiled coil) with TRIM17 (via coiled coil).

In terms of biological role, may play a role in the process of differentiation and maturation of neuronal cells. May regulate the activity of TRIM17. Is a negative regulator of PAX6 expression. This chain is Tripartite motif-containing protein 44 (Trim44), found in Rattus norvegicus (Rat).